The chain runs to 428 residues: Adenylosuccinate synthetase (428 aa).

Residues 12–18 (GDEGKGK) and 40–42 (GHT) contribute to the GTP site. Residue Asp13 is the Proton acceptor of the active site. Mg(2+) contacts are provided by Asp13 and Gly40. IMP is bound by residues 13–16 (DEGK), 38–41 (NAGH), Thr130, Arg144, Gln225, Thr240, and Arg304. The active-site Proton donor is the His41. 300 to 306 (VTTGRAR) is a binding site for substrate. Residues Arg306, 332 to 334 (KID), and 414 to 416 (SVG) each bind GTP.

It belongs to the adenylosuccinate synthetase family. Homodimer. It depends on Mg(2+) as a cofactor.

Its subcellular location is the cytoplasm. The catalysed reaction is IMP + L-aspartate + GTP = N(6)-(1,2-dicarboxyethyl)-AMP + GDP + phosphate + 2 H(+). It functions in the pathway purine metabolism; AMP biosynthesis via de novo pathway; AMP from IMP: step 1/2. Its function is as follows. Plays an important role in the de novo pathway of purine nucleotide biosynthesis. Catalyzes the first committed step in the biosynthesis of AMP from IMP. The protein is Adenylosuccinate synthetase of Clostridium botulinum (strain 657 / Type Ba4).